Consider the following 219-residue polypeptide: Ribose-5-phosphate isomerase A (219 aa).

Substrate is bound by residues 28 to 31, 81 to 84, and 94 to 97; these read SGST, DGAD, and KGGG. Residue glutamate 103 is the Proton acceptor of the active site. Lysine 121 serves as a coordination point for substrate.

This sequence belongs to the ribose 5-phosphate isomerase family. As to quaternary structure, homodimer.

The catalysed reaction is aldehydo-D-ribose 5-phosphate = D-ribulose 5-phosphate. It functions in the pathway carbohydrate degradation; pentose phosphate pathway; D-ribose 5-phosphate from D-ribulose 5-phosphate (non-oxidative stage): step 1/1. Its function is as follows. Catalyzes the reversible conversion of ribose-5-phosphate to ribulose 5-phosphate. The polypeptide is Ribose-5-phosphate isomerase A (Haemophilus influenzae (strain PittEE)).